Reading from the N-terminus, the 179-residue chain is Endoribonuclease YbeY (179 aa).

Zn(2+)-binding residues include His-141, His-145, and His-151.

The protein belongs to the endoribonuclease YbeY family. Zn(2+) is required as a cofactor.

It is found in the cytoplasm. Functionally, single strand-specific metallo-endoribonuclease involved in late-stage 70S ribosome quality control and in maturation of the 3' terminus of the 16S rRNA. This is Endoribonuclease YbeY from Synechocystis sp. (strain ATCC 27184 / PCC 6803 / Kazusa).